Here is a 324-residue protein sequence, read N- to C-terminus: o-succinylbenzoate synthase (324 aa).

The active-site Proton donor is lysine 135. Residues aspartate 163, glutamate 192, and aspartate 215 each contribute to the Mg(2+) site. The active-site Proton acceptor is the lysine 237.

This sequence belongs to the mandelate racemase/muconate lactonizing enzyme family. MenC type 1 subfamily. It depends on a divalent metal cation as a cofactor.

The enzyme catalyses (1R,6R)-6-hydroxy-2-succinyl-cyclohexa-2,4-diene-1-carboxylate = 2-succinylbenzoate + H2O. The protein operates within quinol/quinone metabolism; 1,4-dihydroxy-2-naphthoate biosynthesis; 1,4-dihydroxy-2-naphthoate from chorismate: step 4/7. Its pathway is quinol/quinone metabolism; menaquinone biosynthesis. Functionally, converts 2-succinyl-6-hydroxy-2,4-cyclohexadiene-1-carboxylate (SHCHC) to 2-succinylbenzoate (OSB). The polypeptide is o-succinylbenzoate synthase (Aliivibrio salmonicida (strain LFI1238) (Vibrio salmonicida (strain LFI1238))).